Consider the following 518-residue polypeptide: Nitrogenase iron-iron protein alpha chain (518 aa).

[8Fe-7S] cluster is bound by residues Cys49 and Cys75. [8Fe-9S-C-homocitryl] cluster contacts are provided by Cys257 and His423.

In terms of assembly, hexamer of two alpha, two beta, and two delta chains. [8Fe-7S] cluster is required as a cofactor. The cofactor is [8Fe-9S-C-homocitryl] cluster.

The catalysed reaction is N2 + 8 reduced [2Fe-2S]-[ferredoxin] + 16 ATP + 16 H2O = H2 + 8 oxidized [2Fe-2S]-[ferredoxin] + 2 NH4(+) + 16 ADP + 16 phosphate + 6 H(+). Its function is as follows. This iron-iron protein is part of the nitrogenase complex that catalyzes the key enzymatic reactions in nitrogen fixation. Other nitrogenase complexes utilize a molybdenum-iron protein or a vanadium-iron protein. This chain is Nitrogenase iron-iron protein alpha chain (anfD), found in Ruminiclostridium hungatei (Clostridium hungatei).